The sequence spans 68 residues: MIKVIKKKSHSGLKKRIKITKKKKLLRGHAYKNHLAASKTTKQNRQLRGVTCVKLCDYNRIKTLIRGL.

This sequence belongs to the bacterial ribosomal protein bL35 family.

The protein is Large ribosomal subunit protein bL35 of Aster yellows witches'-broom phytoplasma (strain AYWB).